Consider the following 473-residue polypeptide: Uronate isomerase (473 aa).

It belongs to the metallo-dependent hydrolases superfamily. Uronate isomerase family.

It carries out the reaction D-glucuronate = D-fructuronate. The catalysed reaction is aldehydo-D-galacturonate = keto-D-tagaturonate. The protein operates within carbohydrate metabolism; pentose and glucuronate interconversion. The protein is Uronate isomerase (uxaC) of Geobacillus stearothermophilus (Bacillus stearothermophilus).